A 351-amino-acid polypeptide reads, in one-letter code: MEEAGQDPLDDVRDVMEIPKLEITKQNLDSLNSDLEKDLQRMDEANQVLLKKIQEKEETIQSLERDITLSVRQAREREELDHRTAEKEAALRDLELETAKLEKNKEILSRSVVEVQKEISRKFKNVSLDKEALKQMLAELKVKLQKSTESCASQEKELVKIESDYQSVYQLCEDQAHYIKKYQEILRQMEKEKEMLLLEKEVQRWRSSIQSAKTRPGADCGSDHELLIAKFRLKLKKVGKTTRPFRCKAQNNATQIVKPGSTLVETIQSNMEKTIVKKQKRIFWYRHFRYFIFVVMIFFRLLGYVLFYLQYINPDLLVDALPMVMSRETLTRLRDALFPFLTLEVEEVLPH.

Positions 17–214 form a coiled coil; sequence EIPKLEITKQ…WRSSIQSAKT (198 aa). The helical transmembrane segment at 292 to 312 threads the bilayer; it reads IFVVMIFFRLLGYVLFYLQYI.

Belongs to the TMCO5 family.

It is found in the membrane. In Bos taurus (Bovine), this protein is Transmembrane and coiled-coil domain-containing protein 5B (TMCO5B).